Reading from the N-terminus, the 443-residue chain is Glutamate--tRNA ligase 1 (443 aa).

The 'HIGH' region signature appears at 9 to 19 (PSPTGYLHVGN). Positions 238-242 (KISKR) match the 'KMSKS' region motif. K241 is a binding site for ATP.

This sequence belongs to the class-I aminoacyl-tRNA synthetase family. Glutamate--tRNA ligase type 1 subfamily. Monomer.

It localises to the cytoplasm. It carries out the reaction tRNA(Glu) + L-glutamate + ATP = L-glutamyl-tRNA(Glu) + AMP + diphosphate. Functionally, catalyzes the attachment of glutamate to tRNA(Glu) in a two-step reaction: glutamate is first activated by ATP to form Glu-AMP and then transferred to the acceptor end of tRNA(Glu). This is Glutamate--tRNA ligase 1 from Ehrlichia ruminantium (strain Welgevonden).